The primary structure comprises 54 residues: Ovomucoid (54 aa).

The 51-residue stretch at 4 to 54 (VDCSEYPKPACTMEHRPLCGSDNQTYDNKCNFCNAVVESNGTLTLSHFGKC) folds into the Kazal-like domain. Disulfide bonds link Cys-6/Cys-36, Cys-14/Cys-33, and Cys-22/Cys-54. Asn-43 is a glycosylation site (N-linked (GlcNAc...) asparagine).

The protein resides in the secreted. This chain is Ovomucoid, found in Guttera pucherani (Eastern crested guineafowl).